Here is a 176-residue protein sequence, read N- to C-terminus: Small ribosomal subunit protein uS5 (176 aa).

The region spanning 11–74 (LSEVLVDVNR…QAAKKRMMKV (64 aa)) is the S5 DRBM domain.

Belongs to the universal ribosomal protein uS5 family. As to quaternary structure, part of the 30S ribosomal subunit. Contacts proteins S4 and S8.

Its function is as follows. With S4 and S12 plays an important role in translational accuracy. Located at the back of the 30S subunit body where it stabilizes the conformation of the head with respect to the body. The chain is Small ribosomal subunit protein uS5 from Rickettsia akari (strain Hartford).